The sequence spans 622 residues: Cilia- and flagella-associated protein 206 (622 aa).

This sequence belongs to the CFAP206 family.

The protein localises to the cytoplasm. It is found in the cytoskeleton. The protein resides in the cilium axoneme. Its subcellular location is the cilium basal body. In terms of biological role, essential for sperm motility and is involved in the regulation of the beating frequency of motile cilia on the epithelial cells of the respiratory tract. Required for the establishment of radial spokes in sperm flagella. In Rattus norvegicus (Rat), this protein is Cilia- and flagella-associated protein 206.